A 909-amino-acid chain; its full sequence is Protein translocase subunit SecA (909 aa).

Residues Gln87, 105-109, and Asp513 each bind ATP; that span reads GEGKT. The segment at 834 to 909 is disordered; the sequence is QEEVERMEEQ…KYKQCHGKID (76 aa). The segment covering 836–853 has biased composition (basic and acidic residues); it reads EVERMEEQRRAQAEEAAR. Residues 854–863 show a composition bias toward low complexity; sequence RAQAQHAAAQ. Positions 874-889 are enriched in basic and acidic residues; that stretch reads EGAHQPMVREERKVGR. Zn(2+) is bound by residues Cys893, Cys895, Cys904, and His905. The span at 899 to 909 shows a compositional bias: basic residues; it reads KKYKQCHGKID.

Belongs to the SecA family. As to quaternary structure, monomer and homodimer. Part of the essential Sec protein translocation apparatus which comprises SecA, SecYEG and auxiliary proteins SecDF-YajC and YidC. Zn(2+) is required as a cofactor.

It localises to the cell inner membrane. The protein localises to the cytoplasm. It carries out the reaction ATP + H2O + cellular proteinSide 1 = ADP + phosphate + cellular proteinSide 2.. Functionally, part of the Sec protein translocase complex. Interacts with the SecYEG preprotein conducting channel. Has a central role in coupling the hydrolysis of ATP to the transfer of proteins into and across the cell membrane, serving both as a receptor for the preprotein-SecB complex and as an ATP-driven molecular motor driving the stepwise translocation of polypeptide chains across the membrane. The protein is Protein translocase subunit SecA of Vibrio campbellii (strain ATCC BAA-1116).